Consider the following 436-residue polypeptide: Kynureninase (436 aa).

Pyridoxal 5'-phosphate is bound by residues L88, T89, 116 to 119 (FPSD), D202, H205, and Y227. K228 bears the N6-(pyridoxal phosphate)lysine mark. Residues W280 and N308 each coordinate pyridoxal 5'-phosphate.

Belongs to the kynureninase family. Homodimer. The cofactor is pyridoxal 5'-phosphate.

It localises to the cytoplasm. The enzyme catalyses L-kynurenine + H2O = anthranilate + L-alanine + H(+). It carries out the reaction 3-hydroxy-L-kynurenine + H2O = 3-hydroxyanthranilate + L-alanine + H(+). Its pathway is amino-acid degradation; L-kynurenine degradation; L-alanine and anthranilate from L-kynurenine: step 1/1. It functions in the pathway cofactor biosynthesis; NAD(+) biosynthesis; quinolinate from L-kynurenine: step 2/3. Its function is as follows. Catalyzes the cleavage of L-kynurenine (L-Kyn) and L-3-hydroxykynurenine (L-3OHKyn) into anthranilic acid (AA) and 3-hydroxyanthranilic acid (3-OHAA), respectively. The polypeptide is Kynureninase (Schistosoma japonicum (Blood fluke)).